The following is a 1053-amino-acid chain: Middle cell wall protein (1053 aa).

An N-terminal signal peptide occupies residues 1-23; it reads MKKVVNSVLASALALTVAPMAFA. SLH domains lie at 26–89, 90–153, and 154–203; these read EAAT…KLAQ, FSNT…KGVW, and PNSM…FGTD.

As to quaternary structure, the middle cell wall layer is composed of subunits of the middle cell wall protein. These proteins form a hexagonal array with a lattice constant of 14.5 nM in the middle cell wall layers.

It localises to the secreted. The protein localises to the cell wall. The protein resides in the S-layer. In terms of biological role, the middle wall protein binds to peptidoglycan and to the outer cell wall protein. This is Middle cell wall protein from Brevibacillus brevis (strain 47 / JCM 6285 / NBRC 100599).